The sequence spans 204 residues: Leucyl/phenylalanyl-tRNA--protein transferase (204 aa).

It belongs to the L/F-transferase family.

Its subcellular location is the cytoplasm. The enzyme catalyses N-terminal L-lysyl-[protein] + L-leucyl-tRNA(Leu) = N-terminal L-leucyl-L-lysyl-[protein] + tRNA(Leu) + H(+). The catalysed reaction is N-terminal L-arginyl-[protein] + L-leucyl-tRNA(Leu) = N-terminal L-leucyl-L-arginyl-[protein] + tRNA(Leu) + H(+). It carries out the reaction L-phenylalanyl-tRNA(Phe) + an N-terminal L-alpha-aminoacyl-[protein] = an N-terminal L-phenylalanyl-L-alpha-aminoacyl-[protein] + tRNA(Phe). Functionally, functions in the N-end rule pathway of protein degradation where it conjugates Leu, Phe and, less efficiently, Met from aminoacyl-tRNAs to the N-termini of proteins containing an N-terminal arginine or lysine. The protein is Leucyl/phenylalanyl-tRNA--protein transferase of Sinorhizobium fredii (strain NBRC 101917 / NGR234).